We begin with the raw amino-acid sequence, 118 residues long: Large ribosomal subunit protein bL20 (118 aa).

The protein belongs to the bacterial ribosomal protein bL20 family.

Binds directly to 23S ribosomal RNA and is necessary for the in vitro assembly process of the 50S ribosomal subunit. It is not involved in the protein synthesizing functions of that subunit. This chain is Large ribosomal subunit protein bL20 (rplT), found in Thermotoga maritima (strain ATCC 43589 / DSM 3109 / JCM 10099 / NBRC 100826 / MSB8).